A 154-amino-acid chain; its full sequence is MQGNQAVVDYMNELLSGELAARDQYFIHSRLYSEWGYTKLFERLNHEMEEETTHAEDFIRRILMLGGTPKMARAELNIGTDVVSCLKADLQTEYEVRDALKKGIKLCEEAQDYVTRDLMVAQLKDTEEDHAHWLEQQLRLIELIGEGNYYQSQL.

One can recognise a Ferritin-like diiron domain in the interval 1 to 145 (MQGNQAVVDY…QQLRLIELIG (145 aa)). Residues Glu-18, Glu-51, His-54, Glu-93, Glu-127, and His-130 each contribute to the Fe cation site.

This sequence belongs to the bacterioferritin family. In terms of assembly, forms a bacterioferritin (BFR) complex with BfrB. Heterooligomer of 24 subunits, arranged as 12 dimers, that are packed together to form an approximately spherical molecule with a central cavity, in which large amounts of iron can be deposited.

It is found in the cytoplasm. It catalyses the reaction 4 Fe(2+) + O2 + 4 H(+) = 4 Fe(3+) + 2 H2O. It carries out the reaction Fe(2+)(in) = Fe(2+)(out). Iron-storage protein. Its ferroxidase center binds Fe(2+), oxidizes it using dioxygen to Fe(3+), and participates in the subsequent Fe(3+) oxide mineral core formation within the central cavity of the BFR protein shell. Plays a role in protection against iron-mediated oxidative stress. This is Bacterial ferritin from Neisseria gonorrhoeae.